The primary structure comprises 443 residues: 23S rRNA (uracil(1939)-C(5))-methyltransferase RlmD (443 aa).

One can recognise a TRAM domain in the interval 4 to 66 (QNRFDRTSFQ…RHFDEARVVE (63 aa)). [4Fe-4S] cluster is bound by residues C79, C85, C88, and C167. The S-adenosyl-L-methionine site is built by Q275, F304, N309, E325, D352, and D373. C399 acts as the Nucleophile in catalysis.

The protein belongs to the class I-like SAM-binding methyltransferase superfamily. RNA M5U methyltransferase family. RlmD subfamily.

It carries out the reaction uridine(1939) in 23S rRNA + S-adenosyl-L-methionine = 5-methyluridine(1939) in 23S rRNA + S-adenosyl-L-homocysteine + H(+). Functionally, catalyzes the formation of 5-methyl-uridine at position 1939 (m5U1939) in 23S rRNA. This is 23S rRNA (uracil(1939)-C(5))-methyltransferase RlmD from Xylella fastidiosa (strain Temecula1 / ATCC 700964).